We begin with the raw amino-acid sequence, 2837 residues long: Bifunctional DNA-directed RNA polymerase subunit beta-beta' (2837 aa).

A DNA-directed RNA polymerase subunit beta region spans residues 1–1433 (MVDSSYMYAS…CLNVDLKQND (1433 aa)). The segment at 1436–2837 (IEDISHTNIA…ESVVAYDQSN (1402 aa)) is DNA-directed RNA polymerase subunit beta'. Residues C1501, C1503, C1516, and C1519 each coordinate Zn(2+). Positions 1893, 1895, and 1897 each coordinate Mg(2+). Positions 2235, 2309, 2316, and 2319 each coordinate Zn(2+).

The protein in the N-terminal section; belongs to the RNA polymerase beta chain family. This sequence in the C-terminal section; belongs to the RNA polymerase beta' chain family. As to quaternary structure, the RNAP catalytic core consists of 2 alpha, 1 beta/beta' and 1 omega subunit. When a sigma factor is associated with the core the holoenzyme is formed, which can initiate transcription. The cofactor is Mg(2+). Zn(2+) serves as cofactor.

The catalysed reaction is RNA(n) + a ribonucleoside 5'-triphosphate = RNA(n+1) + diphosphate. Functionally, DNA-dependent RNA polymerase catalyzes the transcription of DNA into RNA using the four ribonucleoside triphosphates as substrates. This is Bifunctional DNA-directed RNA polymerase subunit beta-beta' (rpoBC) from Wolbachia pipientis wMel.